The sequence spans 87 residues: Small ribosomal subunit protein bS20 (87 aa).

The disordered stretch occupies residues 1-26 (MANIKSAKKRAVQSEKARKHNASRRS).

Belongs to the bacterial ribosomal protein bS20 family.

Functionally, binds directly to 16S ribosomal RNA. The chain is Small ribosomal subunit protein bS20 from Salmonella typhi.